Reading from the N-terminus, the 425-residue chain is Serine--tRNA ligase (425 aa).

L-serine is bound at residue 233-235 (TAE). 264–266 (RRE) contacts ATP. Glutamate 287 contributes to the L-serine binding site. 351–354 (EISS) contacts ATP. L-serine is bound at residue serine 385.

Belongs to the class-II aminoacyl-tRNA synthetase family. Type-1 seryl-tRNA synthetase subfamily. Homodimer. The tRNA molecule binds across the dimer.

The protein localises to the cytoplasm. The enzyme catalyses tRNA(Ser) + L-serine + ATP = L-seryl-tRNA(Ser) + AMP + diphosphate + H(+). It carries out the reaction tRNA(Sec) + L-serine + ATP = L-seryl-tRNA(Sec) + AMP + diphosphate + H(+). It participates in aminoacyl-tRNA biosynthesis; selenocysteinyl-tRNA(Sec) biosynthesis; L-seryl-tRNA(Sec) from L-serine and tRNA(Sec): step 1/1. Catalyzes the attachment of serine to tRNA(Ser). Is also able to aminoacylate tRNA(Sec) with serine, to form the misacylated tRNA L-seryl-tRNA(Sec), which will be further converted into selenocysteinyl-tRNA(Sec). This Parasynechococcus marenigrum (strain WH8102) protein is Serine--tRNA ligase.